The sequence spans 239 residues: Ribosomal RNA small subunit methyltransferase G (239 aa).

Residues Gly77, Phe82, 128-129 (AE), and Arg147 contribute to the S-adenosyl-L-methionine site. A disordered region spans residues 216 to 239 (KKQSQTPKKFPRKPGTPNKSPIEG).

Belongs to the methyltransferase superfamily. RNA methyltransferase RsmG family.

The protein resides in the cytoplasm. Its function is as follows. Specifically methylates the N7 position of guanine in position 535 of 16S rRNA. This chain is Ribosomal RNA small subunit methyltransferase G, found in Bacillus licheniformis (strain ATCC 14580 / DSM 13 / JCM 2505 / CCUG 7422 / NBRC 12200 / NCIMB 9375 / NCTC 10341 / NRRL NRS-1264 / Gibson 46).